The sequence spans 391 residues: Tyrosine recombinase XerC-like (391 aa).

The Core-binding (CB) domain occupies 64 to 148 (VTLGDLMHTW…FLKTFFNYAV (85 aa)). The Tyr recombinase domain occupies 175-384 (TEIETFSDEE…IPKQKTNAVE (210 aa)). Active-site residues include R210, K244, H335, R338, and H361. The active-site O-(3'-phospho-DNA)-tyrosine intermediate is the Y371.

This sequence belongs to the 'phage' integrase family.

It localises to the cytoplasm. In terms of biological role, site-specific tyrosine recombinase, which acts by catalyzing the cutting and rejoining of the recombining DNA molecules. The chain is Tyrosine recombinase XerC-like from Caldanaerobacter subterraneus subsp. tengcongensis (strain DSM 15242 / JCM 11007 / NBRC 100824 / MB4) (Thermoanaerobacter tengcongensis).